The primary structure comprises 127 residues: Small ribosomal subunit protein uS13 (127 aa).

Residues 95 to 127 are disordered; the sequence is GLPLRGQRTKTNARTRRGKKGAAIGGKKKATKK.

Belongs to the universal ribosomal protein uS13 family. Part of the 30S ribosomal subunit. Forms a loose heterodimer with protein S19. Forms two bridges to the 50S subunit in the 70S ribosome.

Its function is as follows. Located at the top of the head of the 30S subunit, it contacts several helices of the 16S rRNA. In the 70S ribosome it contacts the 23S rRNA (bridge B1a) and protein L5 of the 50S subunit (bridge B1b), connecting the 2 subunits; these bridges are implicated in subunit movement. Contacts the tRNAs in the A and P-sites. This chain is Small ribosomal subunit protein uS13, found in Herpetosiphon aurantiacus (strain ATCC 23779 / DSM 785 / 114-95).